A 295-amino-acid polypeptide reads, in one-letter code: Ribosomal protein L11 methyltransferase (295 aa).

Positions 150, 171, 193, and 232 each coordinate S-adenosyl-L-methionine.

It belongs to the methyltransferase superfamily. PrmA family.

The protein resides in the cytoplasm. It catalyses the reaction L-lysyl-[protein] + 3 S-adenosyl-L-methionine = N(6),N(6),N(6)-trimethyl-L-lysyl-[protein] + 3 S-adenosyl-L-homocysteine + 3 H(+). Methylates ribosomal protein L11. This Neisseria gonorrhoeae (strain ATCC 700825 / FA 1090) protein is Ribosomal protein L11 methyltransferase.